Consider the following 347-residue polypeptide: NADH-ubiquinone oxidoreductase chain 2 (347 aa).

Helical transmembrane passes span P3–S23, H25–M45, Y59–M79, T96–P116, V122–L142, I149–G169, I178–P198, M200–M220, S242–P262, E274–M294, and M323–L343.

The protein belongs to the complex I subunit 2 family. As to quaternary structure, core subunit of respiratory chain NADH dehydrogenase (Complex I) which is composed of 45 different subunits. Interacts with TMEM242.

The protein localises to the mitochondrion inner membrane. The enzyme catalyses a ubiquinone + NADH + 5 H(+)(in) = a ubiquinol + NAD(+) + 4 H(+)(out). Functionally, core subunit of the mitochondrial membrane respiratory chain NADH dehydrogenase (Complex I) that is believed to belong to the minimal assembly required for catalysis. Complex I functions in the transfer of electrons from NADH to the respiratory chain. The immediate electron acceptor for the enzyme is believed to be ubiquinone. The sequence is that of NADH-ubiquinone oxidoreductase chain 2 from Suricata suricatta (Meerkat).